The chain runs to 361 residues: 5-formaminoimidazole-4-carboxamide-1-(beta)-D-ribofuranosyl 5'-monophosphate synthetase (361 aa).

Positions 27 and 94 each coordinate 5-amino-1-(5-phospho-beta-D-ribosyl)imidazole-4-carboxamide. In terms of domain architecture, ATP-grasp spans 116 to 348 (RAILRWEAER…MGQRIAREIK (233 aa)). ATP is bound by residues 146 to 208 (PDDI…ANYC) and E230. Residue N258 coordinates 5-amino-1-(5-phospho-beta-D-ribosyl)imidazole-4-carboxamide. The Mg(2+) site is built by Q297 and E310.

It belongs to the phosphohexose mutase family. Mg(2+) serves as cofactor. The cofactor is Mn(2+).

It carries out the reaction 5-amino-1-(5-phospho-beta-D-ribosyl)imidazole-4-carboxamide + formate + ATP = 5-formamido-1-(5-phospho-D-ribosyl)imidazole-4-carboxamide + ADP + phosphate. The protein operates within purine metabolism; IMP biosynthesis via de novo pathway; 5-formamido-1-(5-phospho-D-ribosyl)imidazole-4-carboxamide from 5-amino-1-(5-phospho-D-ribosyl)imidazole-4-carboxamide (formate route): step 1/1. In terms of biological role, catalyzes the ATP- and formate-dependent formylation of 5-aminoimidazole-4-carboxamide-1-beta-d-ribofuranosyl 5'-monophosphate (AICAR) to 5-formaminoimidazole-4-carboxamide-1-beta-d-ribofuranosyl 5'-monophosphate (FAICAR) in the absence of folates. The protein is 5-formaminoimidazole-4-carboxamide-1-(beta)-D-ribofuranosyl 5'-monophosphate synthetase of Methanococcus maripaludis (strain C7 / ATCC BAA-1331).